A 515-amino-acid chain; its full sequence is Maturase K (515 aa).

The protein belongs to the intron maturase 2 family. MatK subfamily.

It localises to the plastid. The protein localises to the chloroplast. Usually encoded in the trnK tRNA gene intron. Probably assists in splicing its own and other chloroplast group II introns. The sequence is that of Maturase K from Cedrus deodara (Deodar cedar).